The following is a 450-amino-acid chain: F-box protein KIB3 (450 aa).

The 31-residue stretch at 20–50 (DLVRLILERLSFVDFHRARCVSSTWYVASKS) folds into the F-box domain.

The protein localises to the cytoplasm. It is found in the nucleus. It localises to the nucleolus. In terms of biological role, component of SCF(ASK-cullin-F-box) E3 ubiquitin ligase complexes, which may mediate the ubiquitination and subsequent proteasomal degradation of target proteins. Required for brassinosteroid (BR) signal transduction. Mediates ASK7/BIN2/SK21 inactivation both by competing with substrate binding (e.g. BZR1) and by promoting its ubiquitination and subsequent proteasomal degradation. The polypeptide is F-box protein KIB3 (Arabidopsis thaliana (Mouse-ear cress)).